A 56-amino-acid polypeptide reads, in one-letter code: U-megalopygitoxin(2)-Mo9 (56 aa).

The N-terminal stretch at 1 to 25 (MKFIVLLLIVTSVLMMFAVTTEASP) is a signal peptide. The residue at position 26 (Gln26) is a Pyrrolidone carboxylic acid. Residue Thr55 is modified to Threonine amide.

It belongs to the caterpillar 2 family. Contains 2 disulfide bonds. As to expression, expressed by the venom apparatus.

Its subcellular location is the secreted. Functionally, probable toxin. The sequence is that of U-megalopygitoxin(2)-Mo9 from Megalopyge opercularis (Southern flannel moth).